A 640-amino-acid polypeptide reads, in one-letter code: 1,4-alpha-glucan branching enzyme GlgB (640 aa).

The Nucleophile role is filled by Asp317. Glu370 (proton donor) is an active-site residue.

This sequence belongs to the glycosyl hydrolase 13 family. GlgB subfamily. As to quaternary structure, monomer.

It catalyses the reaction Transfers a segment of a (1-&gt;4)-alpha-D-glucan chain to a primary hydroxy group in a similar glucan chain.. Its pathway is glycan biosynthesis; glycogen biosynthesis. Functionally, catalyzes the formation of the alpha-1,6-glucosidic linkages in glycogen by scission of a 1,4-alpha-linked oligosaccharide from growing alpha-1,4-glucan chains and the subsequent attachment of the oligosaccharide to the alpha-1,6 position. The sequence is that of 1,4-alpha-glucan branching enzyme GlgB from Nitratidesulfovibrio vulgaris (strain ATCC 29579 / DSM 644 / CCUG 34227 / NCIMB 8303 / VKM B-1760 / Hildenborough) (Desulfovibrio vulgaris).